Reading from the N-terminus, the 212-residue chain is MKSNKKILFIGAPGSGKGTISKILVEKYKLVHISTGDLFRKKISEDSQFAAQIQNYLSSGSYVPDEITNKLVADFIKKIPKNQGYILDGYPRTLQQLEFMIKNGINLDCVFYLKIKNETIISRLSQRLFCQKCQKSYNLLLAKPKNGLKCDLDNTDLITRNDDRPEIITHRIEKFNNSVIPIVEFFKKSGIIYYLDAEQTLEETVIEIEKWL.

ATP is bound at residue 14 to 19 (GSGKGT). An NMP region spans residues 34–63 (STGDLFRKKISEDSQFAAQIQNYLSSGSYV). Residues T35, R40, 61 to 63 (SYV), 89 to 92 (GYPR), and Q96 contribute to the AMP site. The LID stretch occupies residues 126–163 (QRLFCQKCQKSYNLLLAKPKNGLKCDLDNTDLITRNDD). ATP is bound at residue R127. Positions 130 and 133 each coordinate Zn(2+). 136–137 (SY) serves as a coordination point for ATP. Positions 150 and 153 each coordinate Zn(2+). R160 and R171 together coordinate AMP. An ATP-binding site is contributed by Q199.

Belongs to the adenylate kinase family. As to quaternary structure, monomer.

It is found in the cytoplasm. It catalyses the reaction AMP + ATP = 2 ADP. It participates in purine metabolism; AMP biosynthesis via salvage pathway; AMP from ADP: step 1/1. Its function is as follows. Catalyzes the reversible transfer of the terminal phosphate group between ATP and AMP. Plays an important role in cellular energy homeostasis and in adenine nucleotide metabolism. This is Adenylate kinase from Mesomycoplasma hyopneumoniae (strain 7448) (Mycoplasma hyopneumoniae).